The chain runs to 283 residues: MEMO1 family protein DKAM_1357 (283 aa).

Belongs to the MEMO1 family.

This is MEMO1 family protein DKAM_1357 from Desulfurococcus amylolyticus (strain DSM 18924 / JCM 16383 / VKM B-2413 / 1221n) (Desulfurococcus kamchatkensis).